The primary structure comprises 337 residues: Tetraacyldisaccharide 4'-kinase (337 aa).

Residue 51–58 participates in ATP binding; that stretch reads HLGGAGKT.

Belongs to the LpxK family.

It catalyses the reaction a lipid A disaccharide + ATP = a lipid IVA + ADP + H(+). It functions in the pathway glycolipid biosynthesis; lipid IV(A) biosynthesis; lipid IV(A) from (3R)-3-hydroxytetradecanoyl-[acyl-carrier-protein] and UDP-N-acetyl-alpha-D-glucosamine: step 6/6. Its function is as follows. Transfers the gamma-phosphate of ATP to the 4'-position of a tetraacyldisaccharide 1-phosphate intermediate (termed DS-1-P) to form tetraacyldisaccharide 1,4'-bis-phosphate (lipid IVA). This chain is Tetraacyldisaccharide 4'-kinase, found in Nitrobacter winogradskyi (strain ATCC 25391 / DSM 10237 / CIP 104748 / NCIMB 11846 / Nb-255).